The primary structure comprises 212 residues: Translation initiation factor IF-3 (212 aa).

This sequence belongs to the IF-3 family. As to quaternary structure, monomer.

It localises to the cytoplasm. IF-3 binds to the 30S ribosomal subunit and shifts the equilibrium between 70S ribosomes and their 50S and 30S subunits in favor of the free subunits, thus enhancing the availability of 30S subunits on which protein synthesis initiation begins. This chain is Translation initiation factor IF-3, found in Synechococcus sp. (strain CC9311).